The chain runs to 372 residues: tRNA-specific 2-thiouridylase MnmA (372 aa).

Residues 7–14 (GLSGGVDS) and Met33 each bind ATP. Residues 104–106 (NPD) form an interaction with target base in tRNA region. Cys109 functions as the Nucleophile in the catalytic mechanism. Cys109 and Cys202 are oxidised to a cystine. Residue Gly134 participates in ATP binding. Residues 152–154 (KDQ) form an interaction with tRNA region. Catalysis depends on Cys202, which acts as the Cysteine persulfide intermediate. Residues 310 to 311 (RY) are interaction with tRNA.

This sequence belongs to the MnmA/TRMU family.

Its subcellular location is the cytoplasm. It catalyses the reaction S-sulfanyl-L-cysteinyl-[protein] + uridine(34) in tRNA + AH2 + ATP = 2-thiouridine(34) in tRNA + L-cysteinyl-[protein] + A + AMP + diphosphate + H(+). Functionally, catalyzes the 2-thiolation of uridine at the wobble position (U34) of tRNA, leading to the formation of s(2)U34. In Mesomycoplasma hyopneumoniae (strain 232) (Mycoplasma hyopneumoniae), this protein is tRNA-specific 2-thiouridylase MnmA.